The chain runs to 267 residues: Acetyl-coenzyme A carboxylase carboxyl transferase subunit beta 1 (267 aa).

A CoA carboxyltransferase N-terminal domain is found at Thr-9 to Gly-267. Residues Cys-13, Cys-16, Cys-31, and Cys-34 each coordinate Zn(2+). The C4-type zinc-finger motif lies at Cys-13–Cys-34.

This sequence belongs to the AccD/PCCB family. As to quaternary structure, acetyl-CoA carboxylase is a heterohexamer composed of biotin carboxyl carrier protein (AccB), biotin carboxylase (AccC) and two subunits each of ACCase subunit alpha (AccA) and ACCase subunit beta (AccD). Zn(2+) is required as a cofactor.

The protein resides in the cytoplasm. It carries out the reaction N(6)-carboxybiotinyl-L-lysyl-[protein] + acetyl-CoA = N(6)-biotinyl-L-lysyl-[protein] + malonyl-CoA. It participates in lipid metabolism; malonyl-CoA biosynthesis; malonyl-CoA from acetyl-CoA: step 1/1. Functionally, component of the acetyl coenzyme A carboxylase (ACC) complex. Biotin carboxylase (BC) catalyzes the carboxylation of biotin on its carrier protein (BCCP) and then the CO(2) group is transferred by the transcarboxylase to acetyl-CoA to form malonyl-CoA. This Lactiplantibacillus plantarum (strain ATCC BAA-793 / NCIMB 8826 / WCFS1) (Lactobacillus plantarum) protein is Acetyl-coenzyme A carboxylase carboxyl transferase subunit beta 1.